Here is a 773-residue protein sequence, read N- to C-terminus: E3 ubiquitin-protein ligase RFWD3 (773 aa).

Disordered stretches follow at residues 18–67 (VAEQ…SQVG), 92–117 (RVEN…IPVS), 139–230 (LRPP…EEVV), and 259–279 (GETL…SVSK). At Ser47 the chain carries Phosphoserine; by ATM and ATR. Low complexity predominate over residues 50–59 (APPLLQPAPA). Ser64 bears the Phosphoserine; by ATM and ATR mark. Residues 151–164 (RSRRRRGSASRRSR) are compositionally biased toward basic residues. The span at 186 to 205 (VSRTQPHLPSMSQDSETRNP) shows a compositional bias: polar residues. A compositionally biased stretch (low complexity) spans 207–221 (SEDLQVSSSSSSDSE). Over residues 263-273 (PKQSPQKTNPL) the composition is skewed to polar residues. The RING-type; degenerate zinc-finger motif lies at 287–331 (CTICFEHWTNAGDHRLSALRCGHLFGYKCISKWLKGQARKCPQCN). Residues 361–403 (SLLKEQMLRKQAELESAQCRLQLQVLTDECSKLHSRVQDLQKL) are a coiled coil. WD repeat units lie at residues 494 to 536 (MHGK…QTYN), 538 to 576 (GRPV…SHIQ), and 582 to 627 (KARC…SHWP).

Interacts with MDM2 and p53/TP53. Binds to the RPA complex via direct interaction with RPA2. Interacts with RAD51. In terms of processing, phosphorylated at Ser-46 and Ser-63 upon DNA damage by ATM or ATR. ATM phosphorylation occurs at early times upon DNA damage, while ATR is the major kinase at later times. Phosphorylation by ATM and ATR is required to stabilize p53/TP53. Part of the phosphorylation depends upon RPA2 presence.

Its subcellular location is the nucleus. It localises to the PML body. It is found in the cytoplasm. It carries out the reaction S-ubiquitinyl-[E2 ubiquitin-conjugating enzyme]-L-cysteine + [acceptor protein]-L-lysine = [E2 ubiquitin-conjugating enzyme]-L-cysteine + N(6)-ubiquitinyl-[acceptor protein]-L-lysine.. The protein operates within protein modification; protein ubiquitination. Its function is as follows. E3 ubiquitin-protein ligase required for the repair of DNA interstrand cross-links (ICL) in response to DNA damage. Plays a key role in RPA-mediated DNA damage signaling and repair. Acts by mediating ubiquitination of the RPA complex (RPA1, RPA2 and RPA3 subunits) and RAD51 at stalled replication forks, leading to remove them from DNA damage sites and promote homologous recombination. Also mediates the ubiquitination of p53/TP53 in the late response to DNA damage, and acts as a positive regulator of p53/TP53 stability, thereby regulating the G1/S DNA damage checkpoint. May act by catalyzing the formation of short polyubiquitin chains on p53/TP53 that are not targeted to the proteasome. In response to ionizing radiation, interacts with MDM2 and enhances p53/TP53 ubiquitination, possibly by restricting MDM2 from extending polyubiquitin chains on ubiquitinated p53/TP53. Required to translesion DNA synthesis across DNA-protein cross-link adducts by catalyzing ubiquitination of proteins on single-stranded DNA (ssDNA). The protein is E3 ubiquitin-protein ligase RFWD3 (RFWD3) of Ailuropoda melanoleuca (Giant panda).